The sequence spans 172 residues: Adenine phosphoribosyltransferase (172 aa).

Belongs to the purine/pyrimidine phosphoribosyltransferase family. As to quaternary structure, homodimer.

The protein resides in the cytoplasm. The catalysed reaction is AMP + diphosphate = 5-phospho-alpha-D-ribose 1-diphosphate + adenine. Its pathway is purine metabolism; AMP biosynthesis via salvage pathway; AMP from adenine: step 1/1. Catalyzes a salvage reaction resulting in the formation of AMP, that is energically less costly than de novo synthesis. The sequence is that of Adenine phosphoribosyltransferase from Methanococcus maripaludis (strain DSM 14266 / JCM 13030 / NBRC 101832 / S2 / LL).